The chain runs to 213 residues: Penicillin-binding protein activator LpoB (213 aa).

The signal sequence occupies residues 1-19; it reads MTKMSRYALITALAMFLAG. C20 carries N-palmitoyl cysteine lipidation. A lipid anchor (S-diacylglycerol cysteine) is attached at C20. The disordered stretch occupies residues 28-74; it reads PVEEVKPAPEQPAEPQQPVPTVPSVPTIPQQPGPIEHEDQTAPPAPH. Over residues 36–50 the composition is skewed to pro residues; it reads PEQPAEPQQPVPTVP.

It belongs to the LpoB family. As to quaternary structure, interacts with PBP1b.

It is found in the cell outer membrane. Functionally, regulator of peptidoglycan synthesis that is essential for the function of penicillin-binding protein 1B (PBP1b). The sequence is that of Penicillin-binding protein activator LpoB from Escherichia coli O157:H7.